A 181-amino-acid polypeptide reads, in one-letter code: Inner membrane-spanning protein YciB (181 aa).

Transmembrane regions (helical) follow at residues 19–39 (FFDIYAATGALIVATLIQLIA), 50–70 (MHLITFALVASFGTATLIFHD), 80–100 (IVYALFAIALIAGQFLGKPIL), 118–138 (LTWYWVLFFVACGLINIYVAF), and 148–168 (FKVFGLTAATLVNTLLTVVYL).

It belongs to the YciB family.

Its subcellular location is the cell inner membrane. Plays a role in cell envelope biogenesis, maintenance of cell envelope integrity and membrane homeostasis. The sequence is that of Inner membrane-spanning protein YciB from Shewanella amazonensis (strain ATCC BAA-1098 / SB2B).